The chain runs to 485 residues: Aspartyl/glutamyl-tRNA(Asn/Gln) amidotransferase subunit B (485 aa).

Belongs to the GatB/GatE family. GatB subfamily. As to quaternary structure, heterotrimer of A, B and C subunits.

It catalyses the reaction L-glutamyl-tRNA(Gln) + L-glutamine + ATP + H2O = L-glutaminyl-tRNA(Gln) + L-glutamate + ADP + phosphate + H(+). The catalysed reaction is L-aspartyl-tRNA(Asn) + L-glutamine + ATP + H2O = L-asparaginyl-tRNA(Asn) + L-glutamate + ADP + phosphate + 2 H(+). In terms of biological role, allows the formation of correctly charged Asn-tRNA(Asn) or Gln-tRNA(Gln) through the transamidation of misacylated Asp-tRNA(Asn) or Glu-tRNA(Gln) in organisms which lack either or both of asparaginyl-tRNA or glutaminyl-tRNA synthetases. The reaction takes place in the presence of glutamine and ATP through an activated phospho-Asp-tRNA(Asn) or phospho-Glu-tRNA(Gln). The protein is Aspartyl/glutamyl-tRNA(Asn/Gln) amidotransferase subunit B of Rhodospirillum rubrum (strain ATCC 11170 / ATH 1.1.1 / DSM 467 / LMG 4362 / NCIMB 8255 / S1).